Reading from the N-terminus, the 357-residue chain is Mannonate dehydratase (357 aa).

It belongs to the mannonate dehydratase family. Requires Fe(2+) as cofactor. Mn(2+) serves as cofactor.

It carries out the reaction D-mannonate = 2-dehydro-3-deoxy-D-gluconate + H2O. It participates in carbohydrate metabolism; pentose and glucuronate interconversion. Catalyzes the dehydration of D-mannonate. In Sorangium cellulosum (strain So ce56) (Polyangium cellulosum (strain So ce56)), this protein is Mannonate dehydratase.